The following is a 471-amino-acid chain: V-type ATP synthase beta chain (471 aa).

This sequence belongs to the ATPase alpha/beta chains family.

Functionally, produces ATP from ADP in the presence of a proton gradient across the membrane. The V-type beta chain is a regulatory subunit. This is V-type ATP synthase beta chain from Deinococcus deserti (strain DSM 17065 / CIP 109153 / LMG 22923 / VCD115).